The primary structure comprises 106 residues: Ribosomal processing cysteine protease Prp (106 aa).

The Proton donor role is filled by His22. The Nucleophile role is filled by Cys34.

The protein belongs to the Prp family. In terms of assembly, homodimer. A mutant protein unable to cleave bL27 copurifies with its substrate.

Its activity is regulated as follows. Not inhibited by short peptide analogs; a 6-mer inhibits only 20% while a 13-mer inhibits 63%. Inhibited by Ac-KLNLQFF-CH(2) which binds covalantly to Cys-34. Inhibited by mersalyl acid (C13H18HgNO6). An essential cysteine protease that cleaves the N-terminal 9 amino acids from ribosomal protein bL27. Also acts as an N-terminal protease on the major capsid and scaffold assembly proteins of bacteriophage 80alpha. Cleavage of the N-terminus of bL27 (and thus this enzyme) is essential for growth; it cannot be replaced by a 'pre-cleaved' or non-cleavable form of bL27. Might serve a chaperone function during ribosome assembly. The polypeptide is Ribosomal processing cysteine protease Prp (Staphylococcus aureus (strain NCTC 8325 / PS 47)).